Consider the following 469-residue polypeptide: Trigger factor (469 aa).

A PPIase FKBP-type domain is found at 166–245 (GDFLTIDITA…VKSVKERELP (80 aa)). A disordered region spans residues 430–469 (GGEEEAAEAEAAPAVDSDAVEGEAATEEAAPSDDPAAVKF).

It belongs to the FKBP-type PPIase family. Tig subfamily.

Its subcellular location is the cytoplasm. It carries out the reaction [protein]-peptidylproline (omega=180) = [protein]-peptidylproline (omega=0). In terms of biological role, involved in protein export. Acts as a chaperone by maintaining the newly synthesized protein in an open conformation. Functions as a peptidyl-prolyl cis-trans isomerase. The sequence is that of Trigger factor from Arthrobacter sp. (strain FB24).